A 359-amino-acid polypeptide reads, in one-letter code: Centromere-binding protein 1 (359 aa).

Residues 1 to 262 form a disordered region; sequence MSGKRSYQDD…SHKEVERRRR (262 aa). The span at 55-78 shows a compositional bias: basic and acidic residues; that stretch reads KENKENRDGDKVGDDEHDVVKGES. A compositionally biased stretch (acidic residues) spans 120–161; the sequence is GDEDEDEDEEEEEDEDDHVDIDDVDKDPDAVIDEDDDEEDED. Basic and acidic residues predominate over residues 249-259; sequence QRKESHKEVER. In terms of domain architecture, bHLH spans 249 to 297; sequence QRKESHKEVERRRRQNINTAIEKLSDLLPVKETSKAAILSRAAEYIQKM.

As to quaternary structure, binds DNA as a dimer.

It is found in the nucleus. The protein localises to the chromosome. The protein resides in the centromere. In terms of biological role, required for chromosome stability and methionine prototrophy. It is involved in chromosomal segregation. Binds to a highly conserved DNA sequence (5'-RTCACRTG-3'), called CDEI, found in centromeres and in several promoters. In Kluyveromyces lactis (strain ATCC 8585 / CBS 2359 / DSM 70799 / NBRC 1267 / NRRL Y-1140 / WM37) (Yeast), this protein is Centromere-binding protein 1 (CBF1).